The primary structure comprises 447 residues: Lipid II isoglutaminyl synthase (glutamine-hydrolyzing) subunit MurT (447 aa).

Residues Cys-205, Cys-208, Cys-227, and Cys-230 each contribute to the Zn(2+) site. Asp-355 is an active-site residue.

Belongs to the MurCDEF family. MurT subfamily. Forms a heterodimer with GatD.

It carries out the reaction beta-D-GlcNAc-(1-&gt;4)-Mur2Ac(oyl-L-Ala-gamma-D-Glu-L-Lys-D-Ala-D-Ala)-di-trans,octa-cis-undecaprenyl diphosphate + L-glutamine + ATP + H2O = beta-D-GlcNAc-(1-&gt;4)-Mur2Ac(oyl-L-Ala-D-isoglutaminyl-L-Lys-D-Ala-D-Ala)-di-trans,octa-cis-undecaprenyl diphosphate + L-glutamate + ADP + phosphate + H(+). The enzyme catalyses beta-D-GlcNAc-(1-&gt;4)-Mur2Ac(oyl-L-Ala-gamma-D-Glu-L-Lys-D-Ala-D-Ala)-di-trans,octa-cis-undecaprenyl diphosphate + ATP = beta-D-GlcNAc-(1-&gt;4)-Mur2Ac(oyl-L-Ala-gamma-D-O-P-Glu-L-Lys-D-Ala-D-Ala)-di-trans,octa-cis-undecaprenyl diphosphate + ADP. It catalyses the reaction beta-D-GlcNAc-(1-&gt;4)-Mur2Ac(oyl-L-Ala-gamma-D-O-P-Glu-L-Lys-D-Ala-D-Ala)-di-trans,octa-cis-undecaprenyl diphosphate + NH4(+) = beta-D-GlcNAc-(1-&gt;4)-Mur2Ac(oyl-L-Ala-D-isoglutaminyl-L-Lys-D-Ala-D-Ala)-di-trans,octa-cis-undecaprenyl diphosphate + phosphate + H(+). Its pathway is cell wall biogenesis; peptidoglycan biosynthesis. Its function is as follows. The lipid II isoglutaminyl synthase complex catalyzes the formation of alpha-D-isoglutamine in the cell wall lipid II stem peptide. The MurT subunit catalyzes the ATP-dependent amidation of D-glutamate residue of lipid II, converting it to an isoglutamine residue. In Streptococcus pneumoniae (strain ATCC BAA-255 / R6), this protein is Lipid II isoglutaminyl synthase (glutamine-hydrolyzing) subunit MurT.